Reading from the N-terminus, the 614-residue chain is MTPSLSLGQRLDDRYLIQLHLGQNSLGQQYLAQDTHRFDEPCTITVLTAPPGDKAGNLFKQQAEILYALDHPQIANFREFFALGSELYLVQDFIEGQSYFDLLKDRRLQGKAFTELEVRQWCRQLLPVLHYLHIQKICHGQISPSSIMRRTVDGLPVLVDFTHSQYYSGTPGEDRRDLHGLGLGAIALLTGEVNPNPPWENLLSSVALSQEFRQLLLKLLAWPPLVDWPTLTDNLNNLPQHFLPTVAEFNLTSTIPEQTDNGVGKSSTGEPPFPTVHQSPESSSSAKVKNMVRVDGLKGLVKKSFILLGLMAIAMALGWGAGQLWLDNQQRAALEKLAQEEPGDDVPEKTDLEIKNEIRARRLNLGISPQRFQTLMDDGLAFQLGIDPQQRLEKNPNTNGAPLSLGSPEQQMAMTITVLDALESLSREATRDFAQNNSGDRRRWIPRVNQLRLSSRSFYDLVNARFHHYLPMVSPALLGEPEFEQRPLAQVWNAMAFDSLASLEDESHYQRLSFDDTNQLNLNGTLEPGEGYAYAVTIPPTEEFSLQLTAPPTARISFYPPTGPEVILQNSAMHRWSGPTDQAGYYELVITSVAEEPIAFELELSIIPASAQPF.

One can recognise a Protein kinase domain in the interval 15–404 (YLIQLHLGQN…NPNTNGAPLS (390 aa)). ATP is bound at residue 21–29 (LGQNSLGQQ). The span at 256–269 (PEQTDNGVGKSSTG) shows a compositional bias: polar residues. The disordered stretch occupies residues 256-284 (PEQTDNGVGKSSTGEPPFPTVHQSPESSS).

The protein belongs to the protein kinase superfamily. Ser/Thr protein kinase family.

Its function is as follows. Lacks protein kinase activity. The protein is Serine/threonine-protein kinase-like protein E (spkE) of Synechocystis sp. (strain ATCC 27184 / PCC 6803 / Kazusa).